The following is a 272-amino-acid chain: MEMTQSSNHIVVIKLGGSVLDSKDTSLKDIATLKQLGLKPVLIHGGASTVSAWSAKLGLETRLVNGERVTDDATLDVVAAILAGLVNKEIVAALLDMGIKAAGISGVDSATITGQIRATETGYLGDVVQVNTELITALLDANITPVISPVSFHQTNRPSGSRRLLNINGDPVAGEIASALQAERLVFLTDVPAVKGKNGEALGEISADHAAELLASGTASGGMIPKLRSCLKATLAGSSACIIDGRKPHMLIRELTEGNCGTTVTGQHLRRS.

Substrate-binding positions include 46 to 47, R68, and N166; that span reads GA.

It belongs to the acetylglutamate kinase family. ArgB subfamily.

It is found in the cytoplasm. The catalysed reaction is N-acetyl-L-glutamate + ATP = N-acetyl-L-glutamyl 5-phosphate + ADP. It participates in amino-acid biosynthesis; L-arginine biosynthesis; N(2)-acetyl-L-ornithine from L-glutamate: step 2/4. Catalyzes the ATP-dependent phosphorylation of N-acetyl-L-glutamate. This Dehalococcoides mccartyi (strain ATCC BAA-2100 / JCM 16839 / KCTC 5957 / BAV1) protein is Acetylglutamate kinase.